Reading from the N-terminus, the 133-residue chain is Small ribosomal subunit protein bS16 (133 aa).

The segment covering 83-101 has biased composition (basic and acidic residues); the sequence is KRDARSNPKKAEPGKKAQE. The segment at 83–102 is disordered; sequence KRDARSNPKKAEPGKKAQER.

It belongs to the bacterial ribosomal protein bS16 family.

The polypeptide is Small ribosomal subunit protein bS16 (Mesorhizobium japonicum (strain LMG 29417 / CECT 9101 / MAFF 303099) (Mesorhizobium loti (strain MAFF 303099))).